We begin with the raw amino-acid sequence, 191 residues long: Ribosomal RNA large subunit methyltransferase E (191 aa).

Residues glycine 49, tryptophan 51, aspartate 66, aspartate 82, and aspartate 105 each contribute to the S-adenosyl-L-methionine site. Lysine 145 functions as the Proton acceptor in the catalytic mechanism.

Belongs to the class I-like SAM-binding methyltransferase superfamily. RNA methyltransferase RlmE family.

Its subcellular location is the cytoplasm. It carries out the reaction uridine(2552) in 23S rRNA + S-adenosyl-L-methionine = 2'-O-methyluridine(2552) in 23S rRNA + S-adenosyl-L-homocysteine + H(+). Specifically methylates the uridine in position 2552 of 23S rRNA at the 2'-O position of the ribose in the fully assembled 50S ribosomal subunit. This chain is Ribosomal RNA large subunit methyltransferase E, found in Archaeoglobus fulgidus (strain ATCC 49558 / DSM 4304 / JCM 9628 / NBRC 100126 / VC-16).